The following is a 252-amino-acid chain: Geranylgeranylglyceryl phosphate synthase (252 aa).

Mg(2+)-binding residues include aspartate 25 and serine 54. Residues 174–180 (FMDAGSG), 205–206 (GG), and 227–228 (GN) contribute to the sn-glycerol 1-phosphate site.

Belongs to the GGGP/HepGP synthase family. Group II subfamily. As to quaternary structure, homohexamer. Mg(2+) serves as cofactor.

The catalysed reaction is sn-glycerol 1-phosphate + (2E,6E,10E)-geranylgeranyl diphosphate = sn-3-O-(geranylgeranyl)glycerol 1-phosphate + diphosphate. Prenyltransferase that catalyzes the transfer of the geranylgeranyl moiety of geranylgeranyl diphosphate (GGPP) to the C3 hydroxyl of sn-glycerol-1-phosphate (G1P). This Chitinophaga pinensis (strain ATCC 43595 / DSM 2588 / LMG 13176 / NBRC 15968 / NCIMB 11800 / UQM 2034) protein is Geranylgeranylglyceryl phosphate synthase.